The primary structure comprises 188 residues: Apolipoprotein M (188 aa).

The not cleaved signal peptide spans 1-22; that stretch reads MFHQIWAALLYFYGIILNSIYQ. 3 disulfide bridges follow: cysteine 23–cysteine 167, cysteine 95–cysteine 183, and cysteine 128–cysteine 157. N-linked (GlcNAc...) asparagine glycosylation occurs at asparagine 135. Residues glutamate 136 and arginine 143 each coordinate tetradecanoate.

The protein belongs to the calycin superfamily. Lipocalin family. Highly divergent. In terms of assembly, interacts with LRP2; LRP2 mediates APOM renal uptake and subsequent lysosomal degradation. As to expression, plasma protein. Expressed in liver and kidney.

It is found in the secreted. Probably involved in lipid transport. Can bind sphingosine-1-phosphate, myristic acid, palmitic acid and stearic acid, retinol, all-trans-retinoic acid and 9-cis-retinoic acid. The chain is Apolipoprotein M (APOM) from Homo sapiens (Human).